The primary structure comprises 423 residues: Testin (423 aa).

Disordered regions lie at residues 1–21 (MSAT…ACAS) and 138–169 (EKQP…PSKC). Residues 97-204 (MILTNPVAAK…GDVKFPSEMN (108 aa)) form the PET domain. The segment covering 160–169 (PAHDQDPSKC) has biased composition (basic and acidic residues). 3 LIM zinc-binding domains span residues 236 to 299 (YSCY…CDSE), 301 to 361 (PRCA…NHAV), and 364 to 423 (QGCH…RMMS).

It belongs to the prickle / espinas / testin family. In terms of assembly, interacts via LIM domain 1 with ZYX. Interacts (via LIM domain 3) with ENAH and VASP. Interacts with ALKBH4, talin, actin, alpha-actinin, GRIP1 and PXN. Interacts (via LIM domain 2) with ACTL7A (via N-terminus). Heterodimer with ACTL7A; the heterodimer interacts with ENAH to form a heterotrimer. In terms of tissue distribution, detected at the acrosome of round spermatids (at protein level). Isoform TES1 transcript is highly expressed in adult testis and detected at low levels in other tissues. Isoform TES2 transcript is highly expressed in testis, kidney and spleen; intermediate in thymus, submaxillary gland and lung; detected at low levels in other tissues.

It localises to the cytoplasm. The protein localises to the cell junction. It is found in the focal adhesion. Functionally, scaffold protein that may play a role in cell adhesion, cell spreading and in the reorganization of the actin cytoskeleton. Plays a role in the regulation of cell proliferation. May act as a tumor suppressor. This is Testin (Tes) from Mus musculus (Mouse).